Consider the following 141-residue polypeptide: uncharacterized protein (141 aa).

This is an uncharacterized protein from Listeria innocua serovar 6a (strain ATCC BAA-680 / CLIP 11262).